The sequence spans 23 residues: M-poneritoxin-Nc1a (23 aa).

Belongs to the non-disulfide-bridged peptide (NDBP) superfamily. Medium-length antimicrobial peptide (group 3) family. Ponericin-W subfamily. In terms of tissue distribution, expressed by the venom gland.

The protein resides in the secreted. It localises to the target cell membrane. In terms of biological role, membrane-perturbating peptide with multiple activities. It is insecticidal, since it induces contractile paralysis in insects (L.cuprina) during several hours, and death after 24 hours. It shows antibacterial activity with higher activity against Gram-positive than Gram-negative bacteria. It is also antiparasitic, since it potently inhibits the larval development of the major pathogenic nematode of ruminants (H.contortus, IC(50)=5.1 uM), but fails to reduce the motility of adult males of the other nematode B.malayi. It also shows cytotoxic activity against HEK293 cells (EC(50)=12-14 uM) and induces hemolysis in human erythrocytes (EC(50)=28.6-48.2 uM). In addition, it causes an important increase in intracellular calcium concentration on neuronal and epithelial cell lines, which supports a non-specific membrane perturbation mechanism of action. In vivo, it induces pain by intraplantar injection into mice, suggesting a defensive function against vertebrate predators. The chain is M-poneritoxin-Nc1a from Neoponera commutata (Large hunting ant).